Reading from the N-terminus, the 141-residue chain is Ribosome-binding factor A (141 aa).

Positions 120-141 are disordered; the sequence is SPHVQRDLQENDDQEDDSEGSL. Positions 129–141 are enriched in acidic residues; it reads ENDDQEDDSEGSL.

It belongs to the RbfA family. In terms of assembly, monomer. Binds 30S ribosomal subunits, but not 50S ribosomal subunits or 70S ribosomes.

It localises to the cytoplasm. In terms of biological role, one of several proteins that assist in the late maturation steps of the functional core of the 30S ribosomal subunit. Associates with free 30S ribosomal subunits (but not with 30S subunits that are part of 70S ribosomes or polysomes). Required for efficient processing of 16S rRNA. May interact with the 5'-terminal helix region of 16S rRNA. The polypeptide is Ribosome-binding factor A (Zymomonas mobilis subsp. mobilis (strain ATCC 31821 / ZM4 / CP4)).